A 527-amino-acid polypeptide reads, in one-letter code: Protein IQ-DOMAIN 4 (527 aa).

The tract at residues 13 to 90 (CLSPGKDKKN…PPSPPPPPPA (78 aa)) is disordered. Residues 17-26 (GKDKKNQKPE) show a composition bias toward basic and acidic residues. A compositionally biased stretch (pro residues) spans 63–90 (PYPPPPPLPDFAPQPLLPPPSPPPPPPA). The IQ domain occupies 147–175 (EETAAIKIQNAYRCYTARRTLRALRGMAR). Positions 256–273 (RSVNRKEASVRRERALAY) are calmodulin-binding. The interval 323–527 (VSVKSSLKRE…EKKRRNGGSS (205 aa)) is disordered. A compositionally biased stretch (polar residues) spans 335-360 (IKSSPARSKTQKSASQSSIQWPVNND). Positions 361 to 370 (TKSRKIEVTN) are enriched in basic and acidic residues. 2 stretches are compositionally biased toward polar residues: residues 399–422 (LDNTQTVKSKVSVETTSNVSNAQT) and 437–455 (NTKTLKSKSSVGTTGNLAN). Over residues 471–481 (PKKEVVADKKK) the composition is skewed to basic and acidic residues. The Nuclear localization signal signature appears at 478 to 485 (DKKKPPQM).

This sequence belongs to the IQD family. As to quaternary structure, binds to multiple calmodulin (CaM) in the presence of Ca(2+) and CaM-like proteins.

Its subcellular location is the nucleus. The protein resides in the nucleolus. In terms of biological role, may be involved in cooperative interactions with calmodulins or calmodulin-like proteins. Recruits calmodulin proteins to microtubules, thus being a potential scaffold in cellular signaling and trafficking. May associate with nucleic acids and regulate gene expression at the transcriptional or post-transcriptional level. In Arabidopsis thaliana (Mouse-ear cress), this protein is Protein IQ-DOMAIN 4.